The following is a 416-amino-acid chain: Pectin acetylesterase 10 (416 aa).

Positions M1–A20 are cleaved as a signal peptide. Residue N27 is glycosylated (N-linked (GlcNAc...) asparagine). Catalysis depends on charge relay system residues S198, D294, and H361.

This sequence belongs to the pectinacetylesterase family.

It is found in the secreted. The protein localises to the cell wall. Functionally, hydrolyzes acetyl esters in homogalacturonan regions of pectin. In type I primary cell wall, galacturonic acid residues of pectin can be acetylated at the O-2 and O-3 positions. Decreasing the degree of acetylation of pectin gels in vitro alters their physical properties. The sequence is that of Pectin acetylesterase 10 from Arabidopsis thaliana (Mouse-ear cress).